Here is a 242-residue protein sequence, read N- to C-terminus: Aspartate/glutamate leucyltransferase (242 aa).

The protein belongs to the R-transferase family. Bpt subfamily.

It localises to the cytoplasm. It carries out the reaction N-terminal L-glutamyl-[protein] + L-leucyl-tRNA(Leu) = N-terminal L-leucyl-L-glutamyl-[protein] + tRNA(Leu) + H(+). The enzyme catalyses N-terminal L-aspartyl-[protein] + L-leucyl-tRNA(Leu) = N-terminal L-leucyl-L-aspartyl-[protein] + tRNA(Leu) + H(+). In terms of biological role, functions in the N-end rule pathway of protein degradation where it conjugates Leu from its aminoacyl-tRNA to the N-termini of proteins containing an N-terminal aspartate or glutamate. The sequence is that of Aspartate/glutamate leucyltransferase from Chromobacterium violaceum (strain ATCC 12472 / DSM 30191 / JCM 1249 / CCUG 213 / NBRC 12614 / NCIMB 9131 / NCTC 9757 / MK).